A 124-amino-acid polypeptide reads, in one-letter code: Heat-labile enterotoxin B chain (124 aa).

The first 21 residues, 1 to 21, serve as a signal peptide directing secretion; the sequence is MNKVKCYVLFTALLSSLCAYG. C30 and C107 form a disulfide bridge.

Heterohexamer of one A chain and of five B chains.

The biological activity of the toxin is produced by the A chain, which activates intracellular adenyl cyclase. This Escherichia coli O78:H11 (strain H10407 / ETEC) protein is Heat-labile enterotoxin B chain (eltB).